The chain runs to 142 residues: uncharacterized protein (142 aa).

Positions Pro-70–Pro-94 are disordered. Residues Glu-81–Pro-94 show a composition bias toward basic and acidic residues.

This is an uncharacterized protein from Bacillus subtilis (strain 168).